Reading from the N-terminus, the 378-residue chain is Anhydro-N-acetylmuramic acid kinase (378 aa).

23 to 30 is an ATP binding site; the sequence is GTSMDGAD.

Belongs to the anhydro-N-acetylmuramic acid kinase family.

The catalysed reaction is 1,6-anhydro-N-acetyl-beta-muramate + ATP + H2O = N-acetyl-D-muramate 6-phosphate + ADP + H(+). It functions in the pathway amino-sugar metabolism; 1,6-anhydro-N-acetylmuramate degradation. Its pathway is cell wall biogenesis; peptidoglycan recycling. Functionally, catalyzes the specific phosphorylation of 1,6-anhydro-N-acetylmuramic acid (anhMurNAc) with the simultaneous cleavage of the 1,6-anhydro ring, generating MurNAc-6-P. Is required for the utilization of anhMurNAc either imported from the medium or derived from its own cell wall murein, and thus plays a role in cell wall recycling. This is Anhydro-N-acetylmuramic acid kinase from Bordetella pertussis (strain Tohama I / ATCC BAA-589 / NCTC 13251).